Consider the following 1255-residue polypeptide: Structural polyprotein (1255 aa).

The interval 1–33 (MFPFQPMYPMQPMPYRNPFAAPRRPWFPRTDPF) is necessary for nucleocapsid assembly and virus assembly. The host transcription inhibition stretch occupies residues 33-68 (FLAMQVQELTRSMANLTFKQRRDAPPEGPPAKKPKR). The Supraphysiological nuclear export signal signature appears at 41 to 48 (LTRSMANL). The interval 44-119 (SMANLTFKQR…KKPGKRQRMV (76 aa)) is disordered. Positions 64–68 (KKPKR) match the Nuclear localization signal motif. A compositionally biased stretch (basic residues) spans 80–92 (GKKKKNQGKKKAK). Residues 91–127 (AKTGPPNPKAQSGNKKKPNKKPGKRQRMVMKLESDKT) form a binding to the viral RNA region. Threonine 93 is subject to Phosphothreonine. Residues 104 to 118 (NKKKPNKKPGKRQRM) are compositionally biased toward basic residues. Residues 112-126 (PGKRQRMVMKLESDK) are ribosome-binding. At serine 124 the chain carries Phosphoserine. The Peptidase S3 domain occupies 126 to 275 (KTFPIMLEGK…KYTPENCEQW (150 aa)). Threonine 127 carries the phosphothreonine modification. Histidine 152 (charge relay system) is an active-site residue. The tract at residues 168–173 (KKASKY) is interaction with spike glycoprotein E2. Catalysis depends on charge relay system residues aspartate 174 and serine 226. The tract at residues 260–264 (EKGVT) is interaction with spike glycoprotein E2. The segment at 276–287 (SLVTTMCLLANV) is functions as an uncleaved signal peptide for the precursor of protein E3/E2. The Extracellular segment spans residues 276 to 701 (SLVTTMCLLA…HYYHRYPMST (426 aa)). 7 disulfide bridges follow: cysteine 282/cysteine 291, cysteine 353/cysteine 457, cysteine 356/cysteine 361, cysteine 424/cysteine 438, cysteine 485/cysteine 600, cysteine 534/cysteine 560, and cysteine 536/cysteine 554. N-linked (GlcNAc...) asparagine; by host glycosylation occurs at asparagine 286. A glycan (N-linked (GlcNAc...) asparagine; by host) is linked at asparagine 652. Residues 702 to 722 (ILGLSICAAIVTVSVAASTWL) traverse the membrane as a helical segment. Topologically, residues 723–757 (FCKSRVSCLTPYRLTPNARMPLCLAVLCCARTARA) are cytoplasmic. Residues 725-729 (KSRVS) form an interaction with the capsid protein region. 3 S-palmitoyl cysteine; by host lipidation sites follow: cysteine 730, cysteine 750, and cysteine 751. A transient transmembrane before p62-6K protein processing region spans residues 730 to 750 (CLTPYRLTPNARMPLCLAVLC). A disulfide bridge connects residues cysteine 730 and cysteine 751. Residues 758–769 (ETTWESLDHLWN) lie on the Extracellular side of the membrane. A helical membrane pass occupies residues 770-790 (NNQQMFWIQLLIPLAALIVVT). A topological domain (cytoplasmic) is located at residue arginine 791. A helical transmembrane segment spans residues 792 to 812 (LLKCVCCVVPFLVVAGAAGAG). The Extracellular portion of the chain corresponds to 813–1225 (AYEHATTMPS…SKTAWTWLTS (413 aa)). 4 cysteine pairs are disulfide-bonded: cysteine 862–cysteine 927, cysteine 875–cysteine 907, cysteine 876–cysteine 909, and cysteine 881–cysteine 891. An E1 fusion peptide loop region spans residues 897–914 (VYPFMWGGAYCFCDTENT). N-linked (GlcNAc...) asparagine; by host glycosylation is found at asparagine 947 and asparagine 1083. Disulfide bonds link cysteine 1072–cysteine 1084, cysteine 1114–cysteine 1189, cysteine 1119–cysteine 1193, and cysteine 1141–cysteine 1183. The chain crosses the membrane as a helical span at residues 1226–1246 (LLGGSAVIIIIGLVLATIVAM). Residues 1247 to 1255 (YVLTNQKHN) are Cytoplasmic-facing.

In terms of assembly, homodimer. Homomultimer. Interacts with host karyopherin KPNA4; this interaction allows the nuclear import of the viral capsid protein. Interacts with spike glycoprotein E2. Interacts with host IRAK1; the interaction leads to inhibition of IRAK1-dependent signaling. Part of a tetrameric complex composed of host CRM1, host importin alpha/beta dimer and the viral capsid; this complex blocks the receptor-mediated transport through the nuclear pore. Interacts with host phosphatase PPP1CA; this interaction dephosphorylates the capsid protein, which increases its ability to bind to the viral genome. As to quaternary structure, the precursor of protein E3/E2 and E1 form a heterodimer shortly after synthesis. Interacts with spike glycoprotein E2. The precursor of protein E3/E2 and E1 form a heterodimer shortly after synthesis. Processing of the precursor of protein E3/E2 into E2 and E3 results in a heterodimer of the spike glycoproteins E2 and E1. Spike at virion surface are constituted of three E2-E1 heterodimers. After target cell attachment and endocytosis, E1 change conformation to form homotrimers. Interacts with 6K protein. Interacts with host LDLRAD3; this interaction mediates viral entry to the host cell. In terms of assembly, interacts with spike glycoprotein E1. Processing of the precursor of protein E3/E2 into E2 and E3 results in a heterodimer of the spike glycoproteins E2 and E1. Spike at virion surface are constituted of a trimer of E2-E1 heterodimers. Interacts with 6K protein. Interacts with host LDLRAD3; this interaction mediates viral entry to the host cell. As to quaternary structure, oligomer. Interacts with spike glycoprotein E1. Interacts with spike glycoprotein E2. Post-translationally, structural polyprotein: Specific enzymatic cleavages in vivo yield mature proteins. Capsid protein is auto-cleaved during polyprotein translation, unmasking a signal peptide at the N-terminus of the precursor of E3/E2. The remaining polyprotein is then targeted to the host endoplasmic reticulum, where host signal peptidase cleaves it into pE2, 6K and E1 proteins. pE2 is further processed to mature E3 and E2 by host furin in trans-Golgi vesicle. Phosphorylated on serine and threonine residues. In terms of processing, palmitoylated via thioester bonds. These palmitoylations may induce disruption of the C-terminus transmembrane. This would result in the reorientation of E2 C-terminus from lumenal to cytoplasmic side. Post-translationally, N-glycosylated. Palmitoylated via thioester bonds.

Its subcellular location is the virion. It is found in the host cytoplasm. It localises to the host cell membrane. The protein resides in the host nucleus. The protein localises to the virion membrane. Its subcellular location is the host Golgi apparatus. It is found in the host trans-Golgi network. It localises to the host endoplasmic reticulum. The enzyme catalyses Autocatalytic release of the core protein from the N-terminus of the togavirus structural polyprotein by hydrolysis of a -Trp-|-Ser- bond.. Forms an icosahedral capsid with a T=4 symmetry composed of 240 copies of the capsid protein surrounded by a lipid membrane through which penetrate 80 spikes composed of trimers of E1-E2 heterodimers. The capsid protein binds to the viral RNA genome at a site adjacent to a ribosome binding site for viral genome translation following genome release. Possesses a protease activity that results in its autocatalytic cleavage from the nascent structural protein. Following its self-cleavage, the capsid protein transiently associates with ribosomes, and within several minutes the protein binds to viral RNA and rapidly assembles into icosahedric core particles. The resulting nucleocapsid eventually associates with the cytoplasmic domain of the spike glycoprotein E2 at the cell membrane, leading to budding and formation of mature virions. In case of infection, new virions attach to target cells and after clathrin-mediated endocytosis their membrane fuses with the host endosomal membrane. This leads to the release of the nucleocapsid into the cytoplasm, followed by an uncoating event necessary for the genomic RNA to become accessible. The uncoating might be triggered by the interaction of capsid proteins with ribosomes. Binding of ribosomes would release the genomic RNA since the same region is genomic RNA-binding and ribosome-binding. Specifically inhibits interleukin-1 receptor-associated kinase 1/IRAK1-dependent signaling during viral entry, representing a means by which the alphaviruses may evade innate immune detection and activation prior to viral gene expression. Inhibits host transcription. Forms a tetrameric complex with XPO1/CRM1 and the nuclear import receptor importin. This complex blocks the central channel of host nuclear pores thereby inhibiting the receptor-mediated nuclear transport and thus the host mRNA and rRNA transcription. The inhibition of transcription is linked to a cytopathic effect on the host cell. Functionally, provides the signal sequence for the translocation of the precursor of protein E3/E2 to the host endoplasmic reticulum. Furin-cleaved E3 remains associated with spike glycoprotein E1 and mediates pH protection of the latter during the transport via the secretory pathway. After virion release from the host cell, the assembly protein E3 is gradually released in the extracellular space. Its function is as follows. Plays a role in viral attachment to target host cell, by binding to the cell receptor LDLRAD3. Synthesized as a p62 precursor which is processed by furin at the cell membrane just before virion budding, giving rise to E2-E1 heterodimer. The p62-E1 heterodimer is stable, whereas E2-E1 is unstable and dissociate at low pH. p62 is processed at the last step, presumably to avoid E1 fusion activation before its final export to cell surface. E2 C-terminus contains a transitory transmembrane that would be disrupted by palmitoylation, resulting in reorientation of the C-terminal tail from lumenal to cytoplasmic side. This step is critical since E2 C-terminus is involved in budding by interacting with capsid proteins. This release of E2 C-terminus in cytoplasm occurs lately in protein export, and precludes premature assembly of particles at the endoplasmic reticulum membrane. In terms of biological role, acts as a viroporin that participates in virus glycoprotein processing and transport to the plasma membrane, cell permeabilization and budding of viral particles. Disrupts the calcium homeostasis of the cell, probably at the endoplasmic reticulum level. This leads to cytoplasmic calcium elevation. Because of its lipophilic properties, the 6K protein is postulated to influence the selection of lipids that interact with the transmembrane domains of the glycoproteins, which, in turn, affects the deformability of the bilayer required for the extreme curvature that occurs as budding proceeds. Present in low amount in virions, about 3% compared to viral glycoproteins. Class II viral fusion protein. Fusion activity is inactive as long as E1 is bound to E2 in mature virion. After virus attachment to cell receptor LDLRAD3 and endocytosis, acidification of the endosome induce dissociation of E1/E2 heterodimer and concomitant trimerization of the E1 subunits. This E1 trimer is fusion active, and promotes release of viral nucleocapsid in cytoplasm after endosome and viral membrane fusion. Efficient fusion requires the presence of cholesterol and sphingolipid in the target membrane. The chain is Structural polyprotein from Venezuelan equine encephalitis virus (strain P676) (VEEV).